A 1403-amino-acid chain; its full sequence is DNA-directed RNA polymerase subunit beta' (1403 aa).

Positions 71, 73, 86, and 89 each coordinate Zn(2+). Mg(2+)-binding residues include D462, D464, and D466. Residues C811, C885, C892, and C895 each contribute to the Zn(2+) site.

This sequence belongs to the RNA polymerase beta' chain family. The RNAP catalytic core consists of 2 alpha, 1 beta, 1 beta' and 1 omega subunit. When a sigma factor is associated with the core the holoenzyme is formed, which can initiate transcription. The cofactor is Mg(2+). It depends on Zn(2+) as a cofactor.

The enzyme catalyses RNA(n) + a ribonucleoside 5'-triphosphate = RNA(n+1) + diphosphate. Its function is as follows. DNA-dependent RNA polymerase catalyzes the transcription of DNA into RNA using the four ribonucleoside triphosphates as substrates. In Bartonella tribocorum (strain CIP 105476 / IBS 506), this protein is DNA-directed RNA polymerase subunit beta'.